A 210-amino-acid chain; its full sequence is Peroxynitrite isomerase (210 aa).

A GXWXGXG motif is present at residues 21–27 (GQWEGQG). Position 190 (H190) interacts with heme b.

Belongs to the nitrobindin family. Homodimer. The cofactor is heme b.

It catalyses the reaction peroxynitrite = nitrate. The protein operates within nitrogen metabolism. Its function is as follows. Heme-binding protein able to scavenge peroxynitrite and to protect free L-tyrosine against peroxynitrite-mediated nitration, by acting as a peroxynitrite isomerase that converts peroxynitrite to nitrate. Therefore, this protein likely plays a role in peroxynitrite sensing and in the detoxification of reactive nitrogen and oxygen species (RNS and ROS, respectively). Is able to bind nitric oxide (NO) in vitro, but may act as a sensor of peroxynitrite levels in vivo. The protein is Peroxynitrite isomerase of Renibacterium salmoninarum (strain ATCC 33209 / DSM 20767 / JCM 11484 / NBRC 15589 / NCIMB 2235).